A 116-amino-acid polypeptide reads, in one-letter code: MSHLLDSVDSASLRSDLPAFRPGDTVNVHVRVIEGNRSRVQQFKGVVIRRQGAGVRETFTVRKVSFSVGVERTFPVHTPIVEKIELVTRGDVRRAKLYYLRELRGKAAKIKEKRES.

The protein belongs to the bacterial ribosomal protein bL19 family.

Functionally, this protein is located at the 30S-50S ribosomal subunit interface and may play a role in the structure and function of the aminoacyl-tRNA binding site. The polypeptide is Large ribosomal subunit protein bL19 (Streptomyces avermitilis (strain ATCC 31267 / DSM 46492 / JCM 5070 / NBRC 14893 / NCIMB 12804 / NRRL 8165 / MA-4680)).